The following is an 847-amino-acid chain: uncharacterized protein (847 aa).

Polar residues predominate over residues 116–126 (TGSSELTTSKT). Disordered stretches follow at residues 116-153 (TGSS…TPIE), 208-245 (LKNF…RLSP), and 361-392 (DLEK…SNVI). The span at 128-145 (IDVDTKEQENRLKQKAEA) shows a compositional bias: basic and acidic residues. Positions 368–378 (SSSASLSTNKL) are enriched in polar residues.

This is an uncharacterized protein from Caenorhabditis elegans.